A 498-amino-acid polypeptide reads, in one-letter code: Glycerol kinase (498 aa).

T12 provides a ligand contact to ADP. T12, T13, and S14 together coordinate ATP. T12 lines the sn-glycerol 3-phosphate pocket. R16 contacts ADP. Sn-glycerol 3-phosphate is bound by residues R82, E83, Y134, and D244. Residues R82, E83, Y134, D244, and Q245 each coordinate glycerol. ADP is bound by residues T266 and G310. Positions 266, 310, 314, and 411 each coordinate ATP. ADP contacts are provided by G411 and N415.

It belongs to the FGGY kinase family.

It carries out the reaction glycerol + ATP = sn-glycerol 3-phosphate + ADP + H(+). Its pathway is polyol metabolism; glycerol degradation via glycerol kinase pathway; sn-glycerol 3-phosphate from glycerol: step 1/1. With respect to regulation, inhibited by fructose 1,6-bisphosphate (FBP). Key enzyme in the regulation of glycerol uptake and metabolism. Catalyzes the phosphorylation of glycerol to yield sn-glycerol 3-phosphate. The polypeptide is Glycerol kinase (Chloroflexus aurantiacus (strain ATCC 29366 / DSM 635 / J-10-fl)).